Reading from the N-terminus, the 1004-residue chain is Translation initiation factor IF-2 (1004 aa).

The interval 36 to 393 (SSTIEPPVVK…RQKRNEYESM (358 aa)) is disordered. 2 stretches are compositionally biased toward low complexity: residues 62 to 157 (AAKP…AKPA) and 173 to 183 (AAKPGAEAPRP). Composition is skewed to pro residues over residues 184 to 196 (GGMPRPMGKPAPK) and 219 to 236 (PRPGGGPRPGGGPRPGGG). Gly residues-rich tracts occupy residues 237–249 (PRPQGQGRPGGQR) and 261–277 (GNRGGQRQGAGAGGPRP). Residues 279 to 303 (GGPRPQGGSRPQGGSAQGAQGAPSQ) are compositionally biased toward low complexity. Residues 330 to 373 (GKGGRGGQAGGGAGGGFNRGGGTGGGAGRGGRRGGTAGAFGRPG) show a composition bias toward gly residues. Basic residues predominate over residues 377–386 (RRGRKSKRQK). In terms of domain architecture, tr-type G spans 499–671 (KRPPVVTVMG…VCLTADAELD (173 aa)). A G1 region spans residues 508–515 (GHVDHGKT). A GTP-binding site is contributed by 508-515 (GHVDHGKT). The tract at residues 533–537 (GITQG) is G2. Positions 558-561 (DTPG) are G3. GTP is bound by residues 558–562 (DTPGH) and 612–615 (NKID). The tract at residues 612–615 (NKID) is G4. Residues 648-650 (SAK) are G5.

It belongs to the TRAFAC class translation factor GTPase superfamily. Classic translation factor GTPase family. IF-2 subfamily.

Its subcellular location is the cytoplasm. In terms of biological role, one of the essential components for the initiation of protein synthesis. Protects formylmethionyl-tRNA from spontaneous hydrolysis and promotes its binding to the 30S ribosomal subunits. Also involved in the hydrolysis of GTP during the formation of the 70S ribosomal complex. This chain is Translation initiation factor IF-2, found in Corynebacterium glutamicum (strain ATCC 13032 / DSM 20300 / JCM 1318 / BCRC 11384 / CCUG 27702 / LMG 3730 / NBRC 12168 / NCIMB 10025 / NRRL B-2784 / 534).